The sequence spans 67 residues: Peptide Ctry2606 (67 aa).

Positions 1-23 (MKTQTALFSFFLVLLLVATQTEG) are cleaved as a signal peptide. At Leu33 the chain carries Leucine amide. The propeptide occupies 37-67 (ALRNQNFVDYAFDPSLSAADWRALETLLEEY).

This sequence belongs to the non-disulfide-bridged peptide (NDBP) superfamily. Short antimicrobial peptide (group 4) family. In terms of tissue distribution, expressed by the venom gland.

The protein resides in the secreted. Functionally, antimicrobial peptide. This is Peptide Ctry2606 from Chaerilus tryznai (Scorpion).